The sequence spans 197 residues: ATP synthase subunit delta (197 aa).

It belongs to the ATPase delta chain family. F-type ATPases have 2 components, F(1) - the catalytic core - and F(0) - the membrane proton channel. F(1) has five subunits: alpha(3), beta(3), gamma(1), delta(1), epsilon(1). F(0) has three main subunits: a(1), b(2) and c(10-14). The alpha and beta chains form an alternating ring which encloses part of the gamma chain. F(1) is attached to F(0) by a central stalk formed by the gamma and epsilon chains, while a peripheral stalk is formed by the delta and b chains.

The protein resides in the cell inner membrane. Functionally, f(1)F(0) ATP synthase produces ATP from ADP in the presence of a proton or sodium gradient. F-type ATPases consist of two structural domains, F(1) containing the extramembraneous catalytic core and F(0) containing the membrane proton channel, linked together by a central stalk and a peripheral stalk. During catalysis, ATP synthesis in the catalytic domain of F(1) is coupled via a rotary mechanism of the central stalk subunits to proton translocation. This protein is part of the stalk that links CF(0) to CF(1). It either transmits conformational changes from CF(0) to CF(1) or is implicated in proton conduction. This chain is ATP synthase subunit delta, found in Bartonella henselae (strain ATCC 49882 / DSM 28221 / CCUG 30454 / Houston 1) (Rochalimaea henselae).